Consider the following 855-residue polypeptide: Inactive rhomboid protein 1 (855 aa).

Residues 1-411 lie on the Cytoplasmic side of the membrane; the sequence is MSEARRDSTS…HRPFFTYWLT (411 aa). Phosphoserine is present on residues Ser-76 and Ser-176. Thr-180 and Thr-183 each carry phosphothreonine. The residue at position 390 (Ser-390) is a Phosphoserine. Residues 412–432 traverse the membrane as a helical segment; that stretch reads FVHSLVTILAVCIYGIAPVGF. The Lumenal segment spans residues 433–655; sequence SQHETVDSVL…NPEVPDQFYR (223 aa). A glycan (N-linked (GlcNAc...) asparagine) is linked at Asn-583. Residues 656–676 traverse the membrane as a helical segment; sequence LWLSLFLHAGILHCLVSICFQ. Residues 677-691 are Cytoplasmic-facing; the sequence is MTVLRDLEKLAGWHR. Residues 692–712 traverse the membrane as a helical segment; it reads IAIIYLLSGVTGNLASAIFLP. Topologically, residues 713–714 are lumenal; sequence YR. Residues 715 to 735 traverse the membrane as a helical segment; sequence AEVGPAGSQFGILACLFVELF. Topologically, residues 736 to 746 are cytoplasmic; sequence QSWQILARPWR. Residues 747-767 traverse the membrane as a helical segment; that stretch reads AFFKLLAVVLFLFTFGLLPWI. At 768–772 the chain is on the lumenal side; the sequence is DNFAH. The helical transmembrane segment at 773 to 793 threads the bilayer; it reads ISGFISGLFLSFAFLPYISFG. Residues 794–803 are Cytoplasmic-facing; that stretch reads KFDLYRKRCQ. Residues 804-824 traverse the membrane as a helical segment; that stretch reads IIIFQVVFLGLLAGLVVLFYV. Residues 825–855 are Lumenal-facing; that stretch reads YPVRCEWCEFLTCIPFTDKFCEKYELDAQLH.

It belongs to the peptidase S54 family. In terms of assembly, homodimer, or homooligomer. Interacts with TGFA and HBEGF. Interacts with EGF; may retain EGF in the endoplasmic reticulum and regulates its degradation through the endoplasmic reticulum-associated degradation (ERAD). Interacts (via cytoplasmic N-terminus) with FRMD8/iTAP; this interaction leads to mutual protein stabilization. Interacts with ADAM17/TACE. N-glycosylated. As to expression, highly expressed in cerebellum, cerebrum, heart, skeletal muscle, placenta, pancreatic islet and testis. Detected at lower levels in colon, kidney, small intestine and lung.

It is found in the endoplasmic reticulum membrane. It localises to the golgi apparatus membrane. Functionally, regulates ADAM17 protease, a sheddase of the epidermal growth factor (EGF) receptor ligands and TNF, thereby plays a role in sleep, cell survival, proliferation, migration and inflammation. Does not exhibit any protease activity on its own. In Homo sapiens (Human), this protein is Inactive rhomboid protein 1 (RHBDF1).